The sequence spans 275 residues: Elongation factor Ts (275 aa).

The segment at 80–83 (TDFV) is involved in Mg(2+) ion dislocation from EF-Tu.

This sequence belongs to the EF-Ts family.

Its subcellular location is the cytoplasm. Associates with the EF-Tu.GDP complex and induces the exchange of GDP to GTP. It remains bound to the aminoacyl-tRNA.EF-Tu.GTP complex up to the GTP hydrolysis stage on the ribosome. The sequence is that of Elongation factor Ts from Clavibacter michiganensis subsp. michiganensis (strain NCPPB 382).